Here is a 217-residue protein sequence, read N- to C-terminus: Guanylate kinase (217 aa).

A Guanylate kinase-like domain is found at 15–194; the sequence is GLMLVLSSPS…AYQRLKRILL (180 aa). An ATP-binding site is contributed by 22–29; that stretch reads SPSGAGKT.

Belongs to the guanylate kinase family.

It is found in the cytoplasm. It catalyses the reaction GMP + ATP = GDP + ADP. Essential for recycling GMP and indirectly, cGMP. The chain is Guanylate kinase from Hyphomonas neptunium (strain ATCC 15444).